A 329-amino-acid chain; its full sequence is Malate dehydrogenase (329 aa).

Residue 12-18 coordinates NAD(+); sequence GAAGQIG. Substrate is bound by residues Arg93 and Arg99. NAD(+)-binding positions include Asn106, Gln113, and 130–132; that span reads TGN. 2 residues coordinate substrate: Asn132 and Arg163. His188 serves as the catalytic Proton acceptor.

This sequence belongs to the LDH/MDH superfamily. MDH type 2 family.

It carries out the reaction (S)-malate + NAD(+) = oxaloacetate + NADH + H(+). Its function is as follows. Catalyzes the reversible oxidation of malate to oxaloacetate. This Mycobacterium bovis (strain ATCC BAA-935 / AF2122/97) protein is Malate dehydrogenase.